The sequence spans 316 residues: tRNA dimethylallyltransferase (316 aa).

Residue 14–21 (GPTAVGKT) coordinates ATP. Substrate is bound at residue 16-21 (TAVGKT). The segment at 39 to 42 (DSMQ) is interaction with substrate tRNA.

This sequence belongs to the IPP transferase family. In terms of assembly, monomer. The cofactor is Mg(2+).

It catalyses the reaction adenosine(37) in tRNA + dimethylallyl diphosphate = N(6)-dimethylallyladenosine(37) in tRNA + diphosphate. Its function is as follows. Catalyzes the transfer of a dimethylallyl group onto the adenine at position 37 in tRNAs that read codons beginning with uridine, leading to the formation of N6-(dimethylallyl)adenosine (i(6)A). This is tRNA dimethylallyltransferase from Bacillus cytotoxicus (strain DSM 22905 / CIP 110041 / 391-98 / NVH 391-98).